A 923-amino-acid polypeptide reads, in one-letter code: Isoleucine--tRNA ligase (923 aa).

Positions 57-67 (PYANGDIHIGT) match the 'HIGH' region motif. Glu561 lines the L-isoleucyl-5'-AMP pocket. Residues 602–606 (AMHKS) carry the 'KMSKS' region motif. Residue Lys605 coordinates ATP. Zn(2+)-binding residues include Cys895, Cys898, Cys915, and Cys918.

Belongs to the class-I aminoacyl-tRNA synthetase family. IleS type 1 subfamily. As to quaternary structure, monomer. Requires Zn(2+) as cofactor.

Its subcellular location is the cytoplasm. It catalyses the reaction tRNA(Ile) + L-isoleucine + ATP = L-isoleucyl-tRNA(Ile) + AMP + diphosphate. Catalyzes the attachment of isoleucine to tRNA(Ile). As IleRS can inadvertently accommodate and process structurally similar amino acids such as valine, to avoid such errors it has two additional distinct tRNA(Ile)-dependent editing activities. One activity is designated as 'pretransfer' editing and involves the hydrolysis of activated Val-AMP. The other activity is designated 'posttransfer' editing and involves deacylation of mischarged Val-tRNA(Ile). This chain is Isoleucine--tRNA ligase, found in Brachyspira hyodysenteriae (strain ATCC 49526 / WA1).